The following is a 310-amino-acid chain: Homoserine kinase (310 aa).

Position 91–101 (91–101 (PLARGLGSSAA)) interacts with ATP.

The protein belongs to the GHMP kinase family. Homoserine kinase subfamily.

The protein resides in the cytoplasm. The catalysed reaction is L-homoserine + ATP = O-phospho-L-homoserine + ADP + H(+). The protein operates within amino-acid biosynthesis; L-threonine biosynthesis; L-threonine from L-aspartate: step 4/5. In terms of biological role, catalyzes the ATP-dependent phosphorylation of L-homoserine to L-homoserine phosphate. The protein is Homoserine kinase of Bacillus pumilus (strain SAFR-032).